The chain runs to 669 residues: UvrABC system protein B (669 aa).

One can recognise a Helicase ATP-binding domain in the interval 26–414 (TNFHAGIAKQ…AGEVIELLVR (389 aa)). Residue 39 to 46 (GVTGSGKT) coordinates ATP. A Beta-hairpin motif is present at residues 92–115 (YYDYYQPEAYVPASDTFIEKDSSI). The Helicase C-terminal domain occupies 435–597 (LISQINVCIK…SVVRPISDIL (163 aa)). Residues 631–666 (AAQMKVLEQQMYQHARDLEFEDAARIRDQIQRLREA) enclose the UVR domain.

It belongs to the UvrB family. As to quaternary structure, forms a heterotetramer with UvrA during the search for lesions. Interacts with UvrC in an incision complex.

It is found in the cytoplasm. Functionally, the UvrABC repair system catalyzes the recognition and processing of DNA lesions. A damage recognition complex composed of 2 UvrA and 2 UvrB subunits scans DNA for abnormalities. Upon binding of the UvrA(2)B(2) complex to a putative damaged site, the DNA wraps around one UvrB monomer. DNA wrap is dependent on ATP binding by UvrB and probably causes local melting of the DNA helix, facilitating insertion of UvrB beta-hairpin between the DNA strands. Then UvrB probes one DNA strand for the presence of a lesion. If a lesion is found the UvrA subunits dissociate and the UvrB-DNA preincision complex is formed. This complex is subsequently bound by UvrC and the second UvrB is released. If no lesion is found, the DNA wraps around the other UvrB subunit that will check the other stand for damage. This is UvrABC system protein B from Xylella fastidiosa (strain 9a5c).